A 479-amino-acid polypeptide reads, in one-letter code: uncharacterized protein (479 aa).

The next 10 membrane-spanning stretches (helical) occupy residues 11-31 (ILMAIPLITFLLPAPDGLSLI), 43-63 (IVGLVLKPYGEPVILLAAIAV), 90-110 (GTTWLIFTAFTLSSAFVITGL), 151-171 (SGGIIFPIINSVVVALGSDPE), 195-215 (IFLTAMAPNALALSLMAPILG), 223-243 (WFLAASVPGLLCLFLIPLICY), 274-294 (KALSVLFVIALFGWIFSNSLH), 295-315 (INATIVAIIVMVLCIVLSIVT), 328-348 (TLVWYGGIIGMSGLLEKSGFF), and 447-467 (WWITGAIIAFGSLIIHLTIGM).

This sequence belongs to the SLC13A/DASS transporter (TC 2.A.47) family. DIT1 subfamily.

It localises to the cell inner membrane. This is an uncharacterized protein from Haemophilus influenzae (strain ATCC 51907 / DSM 11121 / KW20 / Rd).